The chain runs to 510 residues: MICRSLLLLRSNAASKASNIVKHVAATGCLPKYSSEAPARYFSSEPSLQVDSTEENGFKGHGMLAPFTAGWQSTDLHPLVIDRSEGSYVYDINGKKYIDALAGLWSTALGGNEPRLIKAATDQLNKLPFYHSFWNRTTKPSLDLANEILSMFTAREMGKIFFTNSGSEANDSQVKLVWYYNNALGRPNKKKFIARSKSYHGSTLVSASLSGLPALHQKFDLPAPFVLHTDCPHYWRFHLPDETEEEFATRLATNLENLILKEGPETIAAFIAEPVMGAGGVIPPPKTYFEKIQAVLKKYDILLIADEVITAFGRLGTMFGCDMYDIKPDLVSIAKALSSAYMPIGAILVSPEITDVIYSQSNKLGSFAHGFTYSGHPVSCAVAIEALKIYKERNIIEHVQKIAPRFQEGIKAFSGSPIVGEIRGLGLILGTEFVDNKSPNDPFPAEWGVGSLFGAECEKRGMLIRVAGDNIMLSPPLIMTPDEVEEIICKYGDALKATEERIAELKAKRG.

The transit peptide at 1–41 (MICRSLLLLRSNAASKASNIVKHVAATGCLPKYSSEAPARY) directs the protein to the mitochondrion. Residue 166–167 (GS) participates in pyridoxal 5'-phosphate binding. A substrate-binding site is contributed by tyrosine 199. Aspartate 306 contributes to the pyridoxal 5'-phosphate binding site. Lysine 335 serves as a coordination point for substrate. Residue lysine 335 is modified to N6-(pyridoxal phosphate)lysine.

It belongs to the class-III pyridoxal-phosphate-dependent aminotransferase family.

It is found in the mitochondrion. The catalysed reaction is 4-aminobutanoate + pyruvate = succinate semialdehyde + L-alanine. It carries out the reaction 4-aminobutanoate + glyoxylate = succinate semialdehyde + glycine. In terms of biological role, transaminase that degrades gamma-amino butyric acid (GABA). This chain is Probable gamma-aminobutyrate transaminase 3, mitochondrial, found in Oryza sativa subsp. japonica (Rice).